The chain runs to 503 residues: UDP-N-acetylmuramate--L-alanine ligase (503 aa).

Residue 120 to 126 (GTHGKTS) participates in ATP binding.

It belongs to the MurCDEF family.

It localises to the cytoplasm. The catalysed reaction is UDP-N-acetyl-alpha-D-muramate + L-alanine + ATP = UDP-N-acetyl-alpha-D-muramoyl-L-alanine + ADP + phosphate + H(+). Its pathway is cell wall biogenesis; peptidoglycan biosynthesis. In terms of biological role, cell wall formation. This Rhodococcus opacus (strain B4) protein is UDP-N-acetylmuramate--L-alanine ligase.